The sequence spans 581 residues: uncharacterized protein (581 aa).

A signal peptide spans 1–28 (MDSKAVSPLIGFVLMLAIIMGLIGIMQA).

This is an uncharacterized protein from Archaeoglobus fulgidus (strain ATCC 49558 / DSM 4304 / JCM 9628 / NBRC 100126 / VC-16).